Here is a 337-residue protein sequence, read N- to C-terminus: Metacaspase III c (337 aa).

2 propeptides span residues 1-6 and 116-125; these read MGFLRR and VPPAATGTRR. A Cysteine sulfenic acid (-SOH) modification is found at C202. C202 and C259 form a disulfide bridge. Residue H207 is part of the active site. D224, D240, and D241 together coordinate Ca(2+). C264 is a catalytic residue. Residue D271 participates in Ca(2+) binding. A propeptide spanning residues 290–337 is cleaved from the precursor; that stretch reads NFDFKKLLGKFGIDDFDKFGGEALGKINGDALGKVGKDALGKLNKFFG.

The protein belongs to the peptidase C14B family. In terms of processing, auto-proteolytic cleavage into a large and a small subunit which probably remain associated by non-covalent bonds. Following oxidative stress, the oxidation of Cys-202 leads to the formation of a disulfide bond between Cys-202 and Cys-259 which enhances catalytic activity.

Its activity is regulated as follows. Activated by Ca(2+). Cysteine protease that cleaves specifically after arginine residues. The protein is Metacaspase III c of Phaeodactylum tricornutum (strain CCAP 1055/1).